The sequence spans 213 residues: Uridine kinase (213 aa).

Position 13-20 (13-20 (GGSCSGKT)) interacts with ATP.

Belongs to the uridine kinase family.

The protein localises to the cytoplasm. It catalyses the reaction uridine + ATP = UMP + ADP + H(+). The enzyme catalyses cytidine + ATP = CMP + ADP + H(+). It functions in the pathway pyrimidine metabolism; CTP biosynthesis via salvage pathway; CTP from cytidine: step 1/3. Its pathway is pyrimidine metabolism; UMP biosynthesis via salvage pathway; UMP from uridine: step 1/1. The protein is Uridine kinase (udk) of Mycoplasma pneumoniae (strain ATCC 29342 / M129 / Subtype 1) (Mycoplasmoides pneumoniae).